The sequence spans 494 residues: GTPase Der (494 aa).

EngA-type G domains follow at residues 3-166 (PVVA…VGEK) and 208-381 (IKLA…ECAT). GTP-binding positions include 9–16 (GRPNVGKS), 56–60 (DTGGI), 118–121 (NKTD), 214–221 (GRPNVGKS), 261–265 (DTAGV), and 326–329 (NKWD). Residues 382 to 466 (RRVNTSMLTK…PIRIQFKEGE (85 aa)) form the KH-like domain.

This sequence belongs to the TRAFAC class TrmE-Era-EngA-EngB-Septin-like GTPase superfamily. EngA (Der) GTPase family. As to quaternary structure, associates with the 50S ribosomal subunit.

GTPase that plays an essential role in the late steps of ribosome biogenesis. The chain is GTPase Der from Serratia proteamaculans (strain 568).